We begin with the raw amino-acid sequence, 236 residues long: Eukaryotic translation initiation factor 3 subunit J (236 aa).

A disordered region spans residues 1-65 (MADDWESAAD…APAKPKPNKA (65 aa)). Positions 28 to 46 (GEDEDEDIKDSWEDEEEKK) are enriched in acidic residues. The span at 47-58 (DEEKPTKTEAPA) shows a compositional bias: basic and acidic residues.

Belongs to the eIF-3 subunit J family. Component of the eukaryotic translation initiation factor 3 (eIF-3) complex. The eIF-3 complex interacts with pix.

It is found in the cytoplasm. Its function is as follows. Component of the eukaryotic translation initiation factor 3 (eIF-3) complex, which is involved in protein synthesis of a specialized repertoire of mRNAs and, together with other initiation factors, stimulates binding of mRNA and methionyl-tRNAi to the 40S ribosome. The eIF-3 complex specifically targets and initiates translation of a subset of mRNAs involved in cell proliferation. In Drosophila melanogaster (Fruit fly), this protein is Eukaryotic translation initiation factor 3 subunit J.